Reading from the N-terminus, the 672-residue chain is Protein seu-1 (672 aa).

Disordered stretches follow at residues 1 to 463 and 576 to 672; these read MSSI…AGTE and LAPP…LKHL. The span at 8-20 shows a compositional bias: basic and acidic residues; it reads NDNRRPTFRDHRT. Residues 25 to 34 are compositionally biased toward gly residues; it reads GRGGSGGGGR. Positions 62–85 are enriched in basic and acidic residues; the sequence is RSQDHRQRSPEVRRHRSPEKESKD. Positions 87 to 105 are enriched in low complexity; sequence VVTSTGSSRGATSASVTSS. Basic and acidic residues-rich tracts occupy residues 107–138, 189–226, 234–268, and 289–306; these read RRHE…DADR, VSRH…KSNG, RRRE…KVED, and EQAK…ESHQ. The span at 307–317 shows a compositional bias: low complexity; sequence SAHSAAVSNAS. Residues 322 to 343 are compositionally biased toward acidic residues; that stretch reads SEEELDYEEDDIDVDLDGDIDV. Basic and acidic residues-rich tracts occupy residues 366–375, 382–396, 410–424, 436–447, 607–626, and 636–659; these read NDVKDETMEE, PEKK…DDKD, RRED…SDHH, RATDHKESRRSE, SFGD…RHMD, and DHRV…ERGF.

In terms of tissue distribution, highly expressed in intestinal cells, lateral hypodermal (seam) cells, Pn.p ventral hypodermal cells, and spermatheca. Expressed at low levels in the ventral nerve cord.

The protein resides in the nucleus. Its function is as follows. Together with unc-5, involved in touch neuron axon guidance. During gonad morphogenesis, plays a role in the unc-5-/unc-6-mediated migration of distal tip cells along the body. This Caenorhabditis elegans protein is Protein seu-1.